Reading from the N-terminus, the 485-residue chain is D-alanine--D-alanyl carrier protein ligase (485 aa).

An ATP-binding site is contributed by Thr144 to Ser145. Asp189 is a binding site for D-alanine. Asn284–Thr289 contacts ATP. Val293 contributes to the D-alanine binding site. 2 residues coordinate ATP: Asp365 and Lys473. Lys473 contributes to the D-alanine binding site.

This sequence belongs to the ATP-dependent AMP-binding enzyme family. DltA subfamily.

The protein resides in the cytoplasm. It carries out the reaction holo-[D-alanyl-carrier protein] + D-alanine + ATP = D-alanyl-[D-alanyl-carrier protein] + AMP + diphosphate. It functions in the pathway cell wall biogenesis; lipoteichoic acid biosynthesis. Catalyzes the first step in the D-alanylation of lipoteichoic acid (LTA), the activation of D-alanine and its transfer onto the D-alanyl carrier protein (Dcp) DltC. In an ATP-dependent two-step reaction, forms a high energy D-alanyl-AMP intermediate, followed by transfer of the D-alanyl residue as a thiol ester to the phosphopantheinyl prosthetic group of the Dcp. D-alanylation of LTA plays an important role in modulating the properties of the cell wall in Gram-positive bacteria, influencing the net charge of the cell wall. This Staphylococcus haemolyticus (strain JCSC1435) protein is D-alanine--D-alanyl carrier protein ligase.